Here is a 423-residue protein sequence, read N- to C-terminus: COUP transcription factor 1 (423 aa).

Residues 1–81 are disordered; the sequence is MAMVVSSWRD…QGPPGSGQSQ (81 aa). Residues 39–67 show a composition bias toward low complexity; the sequence is EQQQQAGSGAPHTPQTPGQPGAPATPGTA. Positions 83 to 158 form a DNA-binding region, nuclear receptor; that stretch reads HIECVVCGDK…VGMRREAVQR (76 aa). 2 NR C4-type zinc fingers span residues 86-106 and 122-146; these read CVVC…CEGC and CRAN…LKKC. Positions 184 to 410 constitute an NR LBD domain; sequence YLSGYISLLL…TLIRDMLLSG (227 aa).

It belongs to the nuclear hormone receptor family. NR2 subfamily. Binds DNA as dimer; homodimer and probable heterodimer with NR2F6. Interacts with GTF2B; this interaction is direct. Interacts with COPS2.

It localises to the nucleus. Its function is as follows. Coup (chicken ovalbumin upstream promoter) transcription factor binds to the ovalbumin promoter and, in conjunction with another protein (S300-II) stimulates initiation of transcription. Binds to both direct repeats and palindromes of the 5'-AGGTCA-3' motif. Represses transcriptional activity of LHCG. This Homo sapiens (Human) protein is COUP transcription factor 1 (NR2F1).